The sequence spans 242 residues: Ribosomal RNA small subunit methyltransferase G (242 aa).

Residues Gly-78, Phe-83, 129 to 130 (AE), and Arg-148 each bind S-adenosyl-L-methionine.

Belongs to the methyltransferase superfamily. RNA methyltransferase RsmG family.

Its subcellular location is the cytoplasm. Functionally, specifically methylates the N7 position of a guanine in 16S rRNA. The polypeptide is Ribosomal RNA small subunit methyltransferase G (Lachnoclostridium phytofermentans (strain ATCC 700394 / DSM 18823 / ISDg) (Clostridium phytofermentans)).